Here is a 136-residue protein sequence, read N- to C-terminus: Nucleoside diphosphate kinase (136 aa).

ATP-binding residues include K10, F58, R86, T92, R104, and N114. H117 acts as the Pros-phosphohistidine intermediate in catalysis.

It belongs to the NDK family. Homotetramer. Requires Mg(2+) as cofactor.

Its subcellular location is the cytoplasm. The catalysed reaction is a 2'-deoxyribonucleoside 5'-diphosphate + ATP = a 2'-deoxyribonucleoside 5'-triphosphate + ADP. It carries out the reaction a ribonucleoside 5'-diphosphate + ATP = a ribonucleoside 5'-triphosphate + ADP. Major role in the synthesis of nucleoside triphosphates other than ATP. The ATP gamma phosphate is transferred to the NDP beta phosphate via a ping-pong mechanism, using a phosphorylated active-site intermediate. The chain is Nucleoside diphosphate kinase from Mycolicibacterium vanbaalenii (strain DSM 7251 / JCM 13017 / BCRC 16820 / KCTC 9966 / NRRL B-24157 / PYR-1) (Mycobacterium vanbaalenii).